The following is a 272-amino-acid chain: 3-methyl-2-oxobutanoate hydroxymethyltransferase (272 aa).

Aspartate 50 and aspartate 89 together coordinate Mg(2+). Residues 50-51, aspartate 89, and lysine 119 each bind 3-methyl-2-oxobutanoate; that span reads DS. Glutamate 121 provides a ligand contact to Mg(2+). Glutamate 188 functions as the Proton acceptor in the catalytic mechanism.

Belongs to the PanB family. Homodecamer; pentamer of dimers. Mg(2+) is required as a cofactor.

The protein resides in the cytoplasm. The catalysed reaction is 3-methyl-2-oxobutanoate + (6R)-5,10-methylene-5,6,7,8-tetrahydrofolate + H2O = 2-dehydropantoate + (6S)-5,6,7,8-tetrahydrofolate. It functions in the pathway cofactor biosynthesis; (R)-pantothenate biosynthesis; (R)-pantoate from 3-methyl-2-oxobutanoate: step 1/2. In terms of biological role, catalyzes the reversible reaction in which hydroxymethyl group from 5,10-methylenetetrahydrofolate is transferred onto alpha-ketoisovalerate to form ketopantoate. This is 3-methyl-2-oxobutanoate hydroxymethyltransferase from Methylobacterium radiotolerans (strain ATCC 27329 / DSM 1819 / JCM 2831 / NBRC 15690 / NCIMB 10815 / 0-1).